The primary structure comprises 321 residues: Glucokinase (321 aa).

An ATP-binding site is contributed by 8–13 (GDVGGT).

Belongs to the bacterial glucokinase family.

The protein resides in the cytoplasm. It catalyses the reaction D-glucose + ATP = D-glucose 6-phosphate + ADP + H(+). This Escherichia coli (strain SMS-3-5 / SECEC) protein is Glucokinase.